Here is a 115-residue protein sequence, read N- to C-terminus: Ribonuclease P protein component (115 aa).

It belongs to the RnpA family. As to quaternary structure, consists of a catalytic RNA component (M1 or rnpB) and a protein subunit.

It catalyses the reaction Endonucleolytic cleavage of RNA, removing 5'-extranucleotides from tRNA precursor.. RNaseP catalyzes the removal of the 5'-leader sequence from pre-tRNA to produce the mature 5'-terminus. It can also cleave other RNA substrates such as 4.5S RNA. The protein component plays an auxiliary but essential role in vivo by binding to the 5'-leader sequence and broadening the substrate specificity of the ribozyme. The polypeptide is Ribonuclease P protein component (Baumannia cicadellinicola subsp. Homalodisca coagulata).